Reading from the N-terminus, the 590-residue chain is Shugoshin (590 aa).

The segment at 1–20 (MPKRKIAPNKESSRRTVSHD) is disordered. Over residues 11–20 (ESSRRTVSHD) the composition is skewed to basic and acidic residues. Residues 25–86 (QIQEFQNLMD…QENVTLRSKT (62 aa)) adopt a coiled-coil conformation. Disordered regions lie at residues 133 to 235 (LRTM…QVEE), 291 to 337 (PSNP…HSMK), and 411 to 550 (RNRE…NSNI). Positions 173 to 185 (SFNKDDGPDLEPK) are enriched in basic and acidic residues. A compositionally biased stretch (low complexity) spans 302 to 326 (PSATLPTTTSDASTVYPSSSSSTNS). Residues 328-337 (PKTKIKHSMK) show a composition bias toward basic residues. Basic and acidic residues predominate over residues 448 to 459 (KKTEDEIHEDTA). Polar residues predominate over residues 513–526 (IVNNLSDENSTTRP). Residues 527-550 (SKSSKGTSNNNNNYNNFDNNNSNI) show a composition bias toward low complexity.

Belongs to the shugoshin family. In terms of processing, ubiquitinated by the anaphase promoting complex (APC) at the onset of anaphase, conducting to its degradation.

The protein localises to the chromosome. The protein resides in the centromere. It is found in the kinetochore. Its subcellular location is the cytoplasm. It localises to the cytoskeleton. The protein localises to the spindle pole. Functionally, plays a central role in chromosome cohesion during mitosis and meiosis divisions by preventing premature dissociation of cohesin complex from centromeres after prophase, when most of cohesin complex dissociates from chromosomes arms. Probably act by protecting REC8 and RAD21 from separase degradation during anaphase. Also acts as a spindle checkpoint component required for sensing tension between sister chromatids during mitosis, its degradation when they separate preventing cell cycle arrest and chromosome loss in anaphase, a time when sister chromatids are no longer under tension. The polypeptide is Shugoshin (SGO1) (Saccharomyces cerevisiae (strain ATCC 204508 / S288c) (Baker's yeast)).